The following is a 401-amino-acid chain: (1R,4R,5S)-(-)-guaia-6,10(14)-diene synthase (401 aa).

Residues Asp-134 and Glu-139 each coordinate Mg(2+). A DDXXD motif motif is present at residues 134–138; the sequence is DDQFD. Arg-242 contacts substrate. Positions 288 and 292 each coordinate Mg(2+). Lys-295 lines the substrate pocket. A Mg(2+)-binding site is contributed by Asp-296. 375-376 is a binding site for substrate; sequence RY.

The protein belongs to the terpene synthase family. Mg(2+) is required as a cofactor.

The catalysed reaction is (2E,6E)-farnesyl diphosphate = (1R,4R,5S)-(-)-guaia-6,10(14)-diene + diphosphate. The protein operates within secondary metabolite biosynthesis; terpenoid biosynthesis. In terms of biological role, catalyzes the conversion of (2E,6E)-farnesyl diphosphate (FPP) to yield the bicyclic sesquiterpene guaia-6,10(14)-diene via a 1,10-cyclization, which requires the abstraction of the pyrophosphate from FPP to yield the (E,E)-germacradienyl cation. The only accepted substrate is farnesyl diphosphate (FPP). This Fusarium mangiferae (Mango malformation disease fungus) protein is (1R,4R,5S)-(-)-guaia-6,10(14)-diene synthase.